The primary structure comprises 79 residues: U-actitoxin-Avd9d (79 aa).

The signal sequence occupies residues 1 to 19 (NLKVLAVFVLCAILVVVTA). A propeptide spanning residues 20-37 (ERRGTETGGYKKDTLEDL) is cleaved from the precursor. The ShKT domain maps to 44–79 (CFDSFKEATCHMAKTNRLCKTSAKYQINCKKTCGLC). 3 disulfide bridges follow: Cys44-Cys79, Cys53-Cys72, and Cys62-Cys76. Residues 67–68 (KY) are crucial for binding to potassium channels.

Belongs to the sea anemone type 1 potassium channel toxin family. Type 1b subfamily.

The protein localises to the secreted. It localises to the nematocyst. Functionally, inhibits voltage-gated potassium channels (Kv1/KCNA). In Anemonia viridis (Snakelocks anemone), this protein is U-actitoxin-Avd9d.